The primary structure comprises 43 residues: MRFKAKCSGCSTEFKAETRKTFGTSIRIHEVMTGHTVKVKQEV.

The polypeptide is Gene 75 protein (75) (Mycobacterium (Mycobacteriophage L5)).